The following is a 267-amino-acid chain: Small ribosomal subunit protein uS2 (267 aa).

Residues 233-250 (RAESDKAETDKVEVEGKG) are compositionally biased toward basic and acidic residues. Positions 233–267 (RAESDKAETDKVEVEGKGEAPAAEAAEVVESADKA) are disordered. The span at 251–261 (EAPAAEAAEVV) shows a compositional bias: low complexity.

The protein belongs to the universal ribosomal protein uS2 family.

This chain is Small ribosomal subunit protein uS2, found in Syntrophotalea carbinolica (strain DSM 2380 / NBRC 103641 / GraBd1) (Pelobacter carbinolicus).